The sequence spans 657 residues: uncharacterized protein (657 aa).

Residue serine 114 is modified to Phosphoserine. Disordered stretches follow at residues 142–216, 228–248, 291–312, 335–354, and 399–522; these read LASQ…SDEE, SSRE…EEEE, STRS…SHTP, SSPG…EGAD, and AEAS…SGRH. Residues 143–169 are compositionally biased toward polar residues; it reads ASQNTDKTSQNQARELPVTENNAQNAK. A compositionally biased stretch (basic and acidic residues) spans 190–206; sequence AGKERTLQTPKQKEPAR. Phosphoserine is present on serine 213. Composition is skewed to polar residues over residues 234-243 and 301-312; these read TNQGFSSANV and SHVSSDTASHTP. Residues 343–354 are compositionally biased toward acidic residues; it reads ETVDEPVSEGAD. A compositionally biased stretch (low complexity) spans 437–451; that stretch reads SASSASAIQQDSTSS. The span at 462–484 shows a compositional bias: polar residues; that stretch reads NTVSSAYSEDFENSPSLTASEPT. The span at 485–495 shows a compositional bias: basic and acidic residues; sequence AHSKESLDRTL. The span at 499 to 513 shows a compositional bias: polar residues; that stretch reads SESSSSVKTDLPQTA.

This is an uncharacterized protein from Homo sapiens (Human).